Here is a 557-residue protein sequence, read N- to C-terminus: Formate--tetrahydrofolate ligase 2 (557 aa).

Position 66–73 (66–73 (TPAGEGKT)) interacts with ATP.

This sequence belongs to the formate--tetrahydrofolate ligase family.

The enzyme catalyses (6S)-5,6,7,8-tetrahydrofolate + formate + ATP = (6R)-10-formyltetrahydrofolate + ADP + phosphate. It functions in the pathway one-carbon metabolism; tetrahydrofolate interconversion. This is Formate--tetrahydrofolate ligase 2 from Streptococcus pyogenes serotype M4 (strain MGAS10750).